A 156-amino-acid chain; its full sequence is ATP synthase subunit b (156 aa).

A helical transmembrane segment spans residues 11 to 31; it reads AIAFILFVAFCMKYVWPPLMA.

Belongs to the ATPase B chain family. F-type ATPases have 2 components, F(1) - the catalytic core - and F(0) - the membrane proton channel. F(1) has five subunits: alpha(3), beta(3), gamma(1), delta(1), epsilon(1). F(0) has three main subunits: a(1), b(2) and c(10-14). The alpha and beta chains form an alternating ring which encloses part of the gamma chain. F(1) is attached to F(0) by a central stalk formed by the gamma and epsilon chains, while a peripheral stalk is formed by the delta and b chains.

Its subcellular location is the cell inner membrane. Functionally, f(1)F(0) ATP synthase produces ATP from ADP in the presence of a proton or sodium gradient. F-type ATPases consist of two structural domains, F(1) containing the extramembraneous catalytic core and F(0) containing the membrane proton channel, linked together by a central stalk and a peripheral stalk. During catalysis, ATP synthesis in the catalytic domain of F(1) is coupled via a rotary mechanism of the central stalk subunits to proton translocation. In terms of biological role, component of the F(0) channel, it forms part of the peripheral stalk, linking F(1) to F(0). This chain is ATP synthase subunit b, found in Erwinia tasmaniensis (strain DSM 17950 / CFBP 7177 / CIP 109463 / NCPPB 4357 / Et1/99).